Here is a 634-residue protein sequence, read N- to C-terminus: Threonine--tRNA ligase (634 aa).

A TGS domain is found at 1-61 (MINIRFPDGS…NSNCELRLIT (61 aa)). The segment at 241–532 (DHRKIGKVLD…LIEHYAGNLP (292 aa)) is catalytic. The Zn(2+) site is built by cysteine 332, histidine 383, and histidine 509.

Belongs to the class-II aminoacyl-tRNA synthetase family. As to quaternary structure, homodimer. It depends on Zn(2+) as a cofactor.

It localises to the cytoplasm. It catalyses the reaction tRNA(Thr) + L-threonine + ATP = L-threonyl-tRNA(Thr) + AMP + diphosphate + H(+). Catalyzes the attachment of threonine to tRNA(Thr) in a two-step reaction: L-threonine is first activated by ATP to form Thr-AMP and then transferred to the acceptor end of tRNA(Thr). Also edits incorrectly charged L-seryl-tRNA(Thr). This Francisella tularensis subsp. tularensis (strain FSC 198) protein is Threonine--tRNA ligase.